A 179-amino-acid polypeptide reads, in one-letter code: ATP synthase subunit delta (179 aa).

This sequence belongs to the ATPase delta chain family. F-type ATPases have 2 components, F(1) - the catalytic core - and F(0) - the membrane proton channel. F(1) has five subunits: alpha(3), beta(3), gamma(1), delta(1), epsilon(1). F(0) has three main subunits: a(1), b(2) and c(10-14). The alpha and beta chains form an alternating ring which encloses part of the gamma chain. F(1) is attached to F(0) by a central stalk formed by the gamma and epsilon chains, while a peripheral stalk is formed by the delta and b chains.

It localises to the cell membrane. F(1)F(0) ATP synthase produces ATP from ADP in the presence of a proton or sodium gradient. F-type ATPases consist of two structural domains, F(1) containing the extramembraneous catalytic core and F(0) containing the membrane proton channel, linked together by a central stalk and a peripheral stalk. During catalysis, ATP synthesis in the catalytic domain of F(1) is coupled via a rotary mechanism of the central stalk subunits to proton translocation. Functionally, this protein is part of the stalk that links CF(0) to CF(1). It either transmits conformational changes from CF(0) to CF(1) or is implicated in proton conduction. In Clostridium botulinum (strain Okra / Type B1), this protein is ATP synthase subunit delta.